Reading from the N-terminus, the 1198-residue chain is Fibronectin type-III domain-containing protein 3A (1198 aa).

Positions 188-201 (KKLKDRQGTQKDKM) are enriched in basic and acidic residues. The interval 188–257 (KKLKDRQGTQ…VDPEMEEKDE (70 aa)) is disordered. Ser203, Ser207, and Ser213 each carry phosphoserine. Fibronectin type-III domains lie at 268-369 (NIVK…TLSC), 373-465 (PPNA…TSGC), 469-562 (VPAS…TCPD), 566-660 (VPVK…TPAV), 664-757 (PCLP…TAPG), 761-851 (QCRP…TPPS), 863-950 (SDDD…TKPL), 951-1045 (PPDP…TPKS), and 1049-1151 (ALKA…TEPP). Position 384 is an N6-acetyllysine (Lys384). A helical transmembrane segment spans residues 1177–1197 (ILVVFAFFSILIAFIIQYFVI).

Belongs to the FNDC3 family. In terms of tissue distribution, testis. Localizes to the acrosome of spermatids, as well as to Leydig cells. Can be detected on the acrosome beginning at steps 2-3 and continuing until step 12 of spermiogenesis.

Its subcellular location is the golgi apparatus membrane. Functionally, mediates spermatid-Sertoli adhesion during spermatogenesis. This Mus musculus (Mouse) protein is Fibronectin type-III domain-containing protein 3A (Fndc3a).